We begin with the raw amino-acid sequence, 335 residues long: Biotin synthase (335 aa).

The Radical SAM core domain maps to 47 to 276; it reads FYGKKVKLNM…SKEIRISGGR (230 aa). Residues Cys-65, Cys-69, and Cys-72 each coordinate [4Fe-4S] cluster. [2Fe-2S] cluster-binding residues include Cys-109, Cys-141, Cys-201, and Arg-271.

It belongs to the radical SAM superfamily. Biotin synthase family. In terms of assembly, homodimer. The cofactor is [4Fe-4S] cluster. [2Fe-2S] cluster is required as a cofactor.

It catalyses the reaction (4R,5S)-dethiobiotin + (sulfur carrier)-SH + 2 reduced [2Fe-2S]-[ferredoxin] + 2 S-adenosyl-L-methionine = (sulfur carrier)-H + biotin + 2 5'-deoxyadenosine + 2 L-methionine + 2 oxidized [2Fe-2S]-[ferredoxin]. The protein operates within cofactor biosynthesis; biotin biosynthesis; biotin from 7,8-diaminononanoate: step 2/2. In terms of biological role, catalyzes the conversion of dethiobiotin (DTB) to biotin by the insertion of a sulfur atom into dethiobiotin via a radical-based mechanism. In Bacillus subtilis (strain 168), this protein is Biotin synthase.